Consider the following 550-residue polypeptide: MKQAKIIGLSTVIALSGIILVACGSKTSEQKNIQFSIPTDVASLDTTILTDQYSYDVAGNVEEGLTRVDSKGNAALALAKSIDVSKDGLTYTVTLKDNLKWSNGDKLTAKDFVYSWKRAVDPKTGSEYAYLMGAVSGANDIISGKSSLDTLGIKAESDTEFTVTLAQPTPYFKFLLSEPVYYPLDQKVVDKYGKQYGTSSDKTVYNGPFMFKSDKAWTGTNKNFSIYANPNYYDKSAVKSKQIDFQVISNANTGAQLYKQGKLDFTLLSTTDLINANKKTEGYTVFKQARTDYIEYNQSGKNASSPDAQKALANQDIRQALNLATNRAEVVKTALPGSTAATSFTPVGMSKTSTGEDFATYAKQDYSYDPTKAKELWAKGLKELGLTKLSLSLEAAGDLAPSEATANFLQTAYQQNLPGLTVNLKLVPFKQRLNDAQNGNFDMVLSGWGGDYAEPSTFLQLFTTGQSYNDGKFSSKTYDDAFKAATTTPDVLEPAKVDEHYKAAEAALYEGSYINPIDFQANPALMNPKITGLEFHSTGLAYDLKSAYIK.

The N-terminal stretch at Met1–Ala22 is a signal peptide. Cys23 is lipidated: N-palmitoyl cysteine. Residue Cys23 is the site of S-diacylglycerol cysteine attachment.

This sequence belongs to the bacterial solute-binding protein 5 family. The complex is composed of two ATP-binding proteins (DppD and DppF), two transmembrane proteins (DppB and DppC) and a solute-binding protein (DppA).

It is found in the cell membrane. In terms of biological role, part of the ABC transporter DppABCDF involved in dipeptide transport. Binds di- and tripeptides with high affinity. Requires a free N-terminal alpha-amino group and an alpha-peptide bound contiguous with the N-terminal amino group, has a strong selectivity for L-residues, and shows preference for dipeptides containing methionine or arginine, followed by hydrophobic tripeptides consisting of leucine or valine residues. The protein is Dipeptide-binding protein of Lactococcus lactis subsp. cremoris (strain MG1363).